The sequence spans 105 residues: Cortistatin (105 aa).

Residues 1–18 form the signal peptide; it reads MPLSPGLLLLLLSGATAT. A propeptide spanning residues 19 to 74 is cleaved from the precursor; sequence AALPLEGGPTGRDSEHMQEAAGIRKSSLLTFLAWWFEWTSQASAGPLIGEEAREVA. Residues cysteine 93 and cysteine 104 are joined by a disulfide bond.

Belongs to the somatostatin family. As to expression, expressed in a subset of GABAergic cells in the cortex and hippocampus.

It localises to the secreted. Functionally, binds to all human somatostatin receptor (SSTR) subtypes. It also inhibits cAMP production induced by forskolin through SSTRs. The polypeptide is Cortistatin (CORT) (Homo sapiens (Human)).